Here is a 1096-residue protein sequence, read N- to C-terminus: DNA-directed RNA polymerase subunit beta (1096 aa).

It belongs to the RNA polymerase beta chain family. In plastids the minimal PEP RNA polymerase catalytic core is composed of four subunits: alpha, beta, beta', and beta''. When a (nuclear-encoded) sigma factor is associated with the core the holoenzyme is formed, which can initiate transcription.

Its subcellular location is the plastid. The protein resides in the chloroplast. It catalyses the reaction RNA(n) + a ribonucleoside 5'-triphosphate = RNA(n+1) + diphosphate. Functionally, DNA-dependent RNA polymerase catalyzes the transcription of DNA into RNA using the four ribonucleoside triphosphates as substrates. The sequence is that of DNA-directed RNA polymerase subunit beta from Guillardia theta (Cryptophyte).